We begin with the raw amino-acid sequence, 158 residues long: Nucleoside diphosphate kinase (158 aa).

Lysine 16, phenylalanine 64, arginine 92, threonine 98, arginine 109, and asparagine 119 together coordinate ATP. Catalysis depends on histidine 122, which acts as the Pros-phosphohistidine intermediate.

It belongs to the NDK family. It depends on Mg(2+) as a cofactor.

It is found in the cytoplasm. The catalysed reaction is a 2'-deoxyribonucleoside 5'-diphosphate + ATP = a 2'-deoxyribonucleoside 5'-triphosphate + ADP. It catalyses the reaction a ribonucleoside 5'-diphosphate + ATP = a ribonucleoside 5'-triphosphate + ADP. Its function is as follows. Major role in the synthesis of nucleoside triphosphates other than ATP. The ATP gamma phosphate is transferred to the NDP beta phosphate via a ping-pong mechanism, using a phosphorylated active-site intermediate. The polypeptide is Nucleoside diphosphate kinase (Haloquadratum walsbyi (strain DSM 16790 / HBSQ001)).